A 489-amino-acid chain; its full sequence is Rhamnulokinase (489 aa).

13-17 (ASSGR) contributes to the ATP binding site. Cysteines 68 and 222 form a disulfide. Substrate-binding positions include Gly-83 and 236–238 (HDT). Asp-237 serves as the catalytic Proton acceptor. Thr-259 provides a ligand contact to ATP. Asn-296 is a binding site for substrate. An ATP-binding site is contributed by Gln-304. Cys-353 and Cys-370 are joined by a disulfide. Gly-402 lines the ATP pocket. Residues Cys-413 and Cys-417 are joined by a disulfide bond.

Belongs to the rhamnulokinase family. As to quaternary structure, monomer. Requires Mg(2+) as cofactor.

It carries out the reaction L-rhamnulose + ATP = L-rhamnulose 1-phosphate + ADP + H(+). It functions in the pathway carbohydrate degradation; L-rhamnose degradation; glycerone phosphate from L-rhamnose: step 2/3. Its function is as follows. Involved in the catabolism of L-rhamnose (6-deoxy-L-mannose). Catalyzes the transfer of the gamma-phosphate group from ATP to the 1-hydroxyl group of L-rhamnulose to yield L-rhamnulose 1-phosphate. This Escherichia coli O157:H7 protein is Rhamnulokinase.